Consider the following 404-residue polypeptide: Omega-3 fatty acid desaturase, chloroplastic (404 aa).

The segment at 28 to 50 (TVDSSSSPPIEEEPKTQRFDPGA) is disordered. Residues 121–125 (HDCGH) carry the Histidine box-1 motif. A Histidine box-2 motif is present at residues 157–161 (HRTHH). The short motif at 324–328 (HVIHH) is the Histidine box-3 element.

The protein belongs to the fatty acid desaturase type 1 family.

It localises to the plastid. The protein resides in the chloroplast membrane. The protein operates within lipid metabolism; polyunsaturated fatty acid biosynthesis. In terms of biological role, chloroplast omega-3 fatty acid desaturase introduces the third double bond in the biosynthesis of 16:3 and 18:3 fatty acids, important constituents of plant membranes. It is thought to use ferredoxin as an electron donor and to act on fatty acids esterified to galactolipids, sulfolipids and phosphatidylglycerol. The chain is Omega-3 fatty acid desaturase, chloroplastic (FAD7) from Brassica napus (Rape).